Here is a 158-residue protein sequence, read N- to C-terminus: 2-C-methyl-D-erythritol 2,4-cyclodiphosphate synthase (158 aa).

Residues D8 and H10 each contribute to the a divalent metal cation site. 4-CDP-2-C-methyl-D-erythritol 2-phosphate-binding positions include 8–10 and 34–35; these read DVH and HS. H42 contributes to the a divalent metal cation binding site. 4-CDP-2-C-methyl-D-erythritol 2-phosphate is bound by residues 56–58, 61–65, 132–135, and F139; these read DIG, FPDDD, and TTFE.

The protein belongs to the IspF family. Homotrimer. A divalent metal cation is required as a cofactor.

It carries out the reaction 4-CDP-2-C-methyl-D-erythritol 2-phosphate = 2-C-methyl-D-erythritol 2,4-cyclic diphosphate + CMP. It participates in isoprenoid biosynthesis; isopentenyl diphosphate biosynthesis via DXP pathway; isopentenyl diphosphate from 1-deoxy-D-xylulose 5-phosphate: step 4/6. Involved in the biosynthesis of isopentenyl diphosphate (IPP) and dimethylallyl diphosphate (DMAPP), two major building blocks of isoprenoid compounds. Catalyzes the conversion of 4-diphosphocytidyl-2-C-methyl-D-erythritol 2-phosphate (CDP-ME2P) to 2-C-methyl-D-erythritol 2,4-cyclodiphosphate (ME-CPP) with a corresponding release of cytidine 5-monophosphate (CMP). This Natranaerobius thermophilus (strain ATCC BAA-1301 / DSM 18059 / JW/NM-WN-LF) protein is 2-C-methyl-D-erythritol 2,4-cyclodiphosphate synthase.